A 452-amino-acid polypeptide reads, in one-letter code: Retrograde protein of 51 kDa (452 aa).

The span at 1–13 (MQKGAKIEDEGRQ) shows a compositional bias: basic and acidic residues. The tract at residues 1-50 (MQKGAKIEDEGRQSRIQSRNFIIQRSDPRTRGSSVYSSRSSSYNVRSSIS) is disordered. A head region spans residues 1–75 (MQKGAKIEDE…KGNREKEKRE (75 aa)). The segment covering 14–23 (SRIQSRNFII) has biased composition (polar residues). Residues 33 to 50 (SSVYSSRSSSYNVRSSIS) show a composition bias toward low complexity. The 353-residue stretch at 72 to 424 (EKREMQNLNE…KLLEGEESRV (353 aa)) folds into the IF rod domain. A coil 1A region spans residues 76 to 111 (MQNLNERLASYIEKVHFLDAQVKKLEAENEALRNRK). The interval 112 to 121 (VEDLQPIRDA) is linker 1. The segment at 122 to 259 (YENELRQARK…DLLDQLELLK (138 aa)) is coil 1B. Ser-156 is subject to Sulfoserine. Residues 260–278 (PEPIQIKGMDYADFWKSEL) form a linker 12 region. Positions 279 to 424 (AKCVREINLA…KLLEGEESRV (146 aa)) are coil 2. Positions 425–452 (GLRTLVEQAIGTQSKGSASLKDAIQSSS) are tail.

This sequence belongs to the intermediate filament family.

This Lymnaea stagnalis (Great pond snail) protein is Retrograde protein of 51 kDa (RGP51).